The chain runs to 606 residues: Putative auxin response factor 21 (606 aa).

Residues 126-228 (FTKVLTASDT…ELRVGIRRAR (103 aa)) constitute a DNA-binding region (TF-B3). The 82-residue stretch at 511 to 592 (RTCTKVQMQG…MVKKILIYSK (82 aa)) folds into the PB1 domain.

Belongs to the ARF family. As to quaternary structure, homodimers and heterodimers.

It is found in the nucleus. Its function is as follows. Auxin response factors (ARFs) are transcriptional factors that bind specifically to the DNA sequence 5'-TGTCTC-3' found in the auxin-responsive promoter elements (AuxREs). Could act as transcriptional activator or repressor. Formation of heterodimers with Aux/IAA proteins may alter their ability to modulate early auxin response genes expression. The sequence is that of Putative auxin response factor 21 (ARF21) from Arabidopsis thaliana (Mouse-ear cress).